The sequence spans 143 residues: Putative pre-16S rRNA nuclease (143 aa).

This sequence belongs to the YqgF nuclease family.

It localises to the cytoplasm. Functionally, could be a nuclease involved in processing of the 5'-end of pre-16S rRNA. The protein is Putative pre-16S rRNA nuclease (ybeB) of Lactococcus lactis subsp. lactis (strain IL1403) (Streptococcus lactis).